The primary structure comprises 397 residues: Mannosylglycerate synthase (397 aa).

GDP-alpha-D-mannose is bound by residues 7–11, Ile35, Gln66, Lys76, Asp100, and 100–101; these read PFKHE and DA. Residue Asp102 coordinates a divalent metal cation. (R)-glycerate is bound by residues Arg131 and 136 to 139; that span reads AMIT. GDP-alpha-D-mannose is bound by residues Leu163 and Asp192. Position 217 (His217) interacts with a divalent metal cation. Arg218 and Tyr220 together coordinate GDP-alpha-D-mannose.

The protein belongs to the glycosyltransferase 78 family. Homotetramer. Dimer of dimers. Requires Mg(2+) as cofactor. The cofactor is Ca(2+). Mn(2+) is required as a cofactor. It depends on Ni(2+) as a cofactor. Co(2+) serves as cofactor.

It catalyses the reaction (R)-glycerate + GDP-alpha-D-mannose = (2R)-2-O-(alpha-D-mannosyl)-glycerate + GDP + H(+). Inhibited by GDP. Its function is as follows. Involved in the biosynthesis of the stress protectant 2-O-alpha-D-mannosyl glycerate (MG) which is produced in response to growth at supraoptimal temperature and salinity, and protects several enzymes against inactivation by temperature, freeze-drying and osmotic stress. Catalyzes the condensation of alpha-GDP-D-mannose (GDP-Man) with D-glycerate to produce alpha-mannosyl-D-glycerate. It is specific for GDP-Man, but it can also use alpha-GDP-D-glucose (GDP-Glc), beta-GDP-D-fructose, alpha-UDP-D-mannose and alpha-UDP-D-glucose as sugar donors. It is specific for D-glycerate, but it can also use D-lactate and glycolate as sugar acceptors. This reaction occurs with a net retention of anomeric configuration; the newly formed glycosidic linkage has the same alpha configuration as the sugar donor. The chain is Mannosylglycerate synthase (mgs) from Rhodothermus marinus (Rhodothermus obamensis).